A 216-amino-acid polypeptide reads, in one-letter code: 3-isopropylmalate dehydratase small subunit (216 aa).

This sequence belongs to the LeuD family. LeuD type 1 subfamily. In terms of assembly, heterodimer of LeuC and LeuD.

It carries out the reaction (2R,3S)-3-isopropylmalate = (2S)-2-isopropylmalate. It participates in amino-acid biosynthesis; L-leucine biosynthesis; L-leucine from 3-methyl-2-oxobutanoate: step 2/4. Its function is as follows. Catalyzes the isomerization between 2-isopropylmalate and 3-isopropylmalate, via the formation of 2-isopropylmaleate. The protein is 3-isopropylmalate dehydratase small subunit of Psychrobacter arcticus (strain DSM 17307 / VKM B-2377 / 273-4).